The primary structure comprises 336 residues: O-methyltransferase 2 (336 aa).

Residues glycine 170, aspartate 198, asparagine 221, phenylalanine 222, and lysine 237 each coordinate S-adenosyl-L-methionine. Residue histidine 241 is the Proton acceptor of the active site.

This sequence belongs to the class I-like SAM-binding methyltransferase superfamily. Cation-independent O-methyltransferase family. COMT subfamily.

It catalyses the reaction (3,5-dichloro-2,4,6-trihydroxyphenyl)hexan-1-one + S-adenosyl-L-methionine = 1-(3,5-dichloro-2,6-dihydroxy-4-methoxyphenyl)hexan-1-one + S-adenosyl-L-homocysteine + H(+). In Dictyostelium discoideum (Social amoeba), this protein is O-methyltransferase 2 (omt2).